The following is a 289-amino-acid chain: 4-hydroxybenzoate octaprenyltransferase (289 aa).

Transmembrane regions (helical) follow at residues 33–53 (LWALWVAAPGLPPLWILAVFV), 99–119 (LFVVLVVLAFLLVLTLNTMTI), 141–161 (LPQVVLGAAFGWSIPMAFAAV), 163–183 (ESVPLSCWLMFLANILWAVAY), 213–233 (LIIGILQVAVLALMVVIGRLN), 238–258 (EFYWSVLVAGLLFAYQQKLIV), and 268–288 (AFLNNNYVGLVLFLGLAMSYW).

It belongs to the UbiA prenyltransferase family. The cofactor is Mg(2+).

The protein localises to the cell inner membrane. It carries out the reaction all-trans-octaprenyl diphosphate + 4-hydroxybenzoate = 4-hydroxy-3-(all-trans-octaprenyl)benzoate + diphosphate. Its pathway is cofactor biosynthesis; ubiquinone biosynthesis. Catalyzes the prenylation of para-hydroxybenzoate (PHB) with an all-trans polyprenyl group. Mediates the second step in the final reaction sequence of ubiquinone-8 (UQ-8) biosynthesis, which is the condensation of the polyisoprenoid side chain with PHB, generating the first membrane-bound Q intermediate 3-octaprenyl-4-hydroxybenzoate. The polypeptide is 4-hydroxybenzoate octaprenyltransferase (Enterobacter sp. (strain 638)).